Here is a 65-residue protein sequence, read N- to C-terminus: Large ribosomal subunit protein bL35 (65 aa).

The tract at residues 1–26 is disordered; the sequence is MPKMKTHRGAAKRFKKTGSGKLKRAK.

It belongs to the bacterial ribosomal protein bL35 family.

This chain is Large ribosomal subunit protein bL35, found in Clostridium novyi (strain NT).